The primary structure comprises 210 residues: Putative biopolymer transport protein ExbB-like 3 (210 aa).

Transmembrane regions (helical) follow at residues 2-22 (AGGI…ALII), 104-124 (LFQT…ILGL), and 152-172 (LVST…ANVF).

The protein belongs to the ExbB/TolQ family.

It is found in the cell inner membrane. Its function is as follows. Involved in the TonB-dependent energy-dependent transport of various receptor-bound substrates. Protects ExbD from proteolytic degradation and functionally stabilizes TonB. The chain is Putative biopolymer transport protein ExbB-like 3 from Synechocystis sp. (strain ATCC 27184 / PCC 6803 / Kazusa).